The primary structure comprises 278 residues: Dermonecrotic toxin LbSicTox-betaIA1a (278 aa).

His12 is an active-site residue. Mg(2+)-binding residues include Glu32 and Asp34. His48 (nucleophile) is an active-site residue. Disulfide bonds link Cys52–Cys58 and Cys54–Cys197. Position 92 (Asp92) interacts with Mg(2+). Asn258 carries N-linked (GlcNAc...) asparagine glycosylation.

The protein belongs to the arthropod phospholipase D family. Class II subfamily. Class IIb sub-subfamily. As to expression, expressed by the venom gland.

Its subcellular location is the secreted. It catalyses the reaction an N-(acyl)-sphingosylphosphoethanolamine = an N-(acyl)-sphingosyl-1,3-cyclic phosphate + ethanolamine. The catalysed reaction is a 1-acyl-sn-glycero-3-phosphocholine = a 1-acyl-sn-glycero-2,3-cyclic phosphate + choline. The enzyme catalyses a 1-acyl-sn-glycero-3-phosphoethanolamine = a 1-acyl-sn-glycero-2,3-cyclic phosphate + ethanolamine. Functionally, this toxin does not show activity on sphingomyelin (SM) and does not show dermonecrotic activities. This toxin is a member of dermonecrotic toxins that cleave the phosphodiester linkage between the phosphate and headgroup of certain phospholipids (sphingolipid and lysolipid substrates), forming an alcohol (often choline) and a cyclic phosphate. It may act on ceramide phosphoethanolamine (CPE), lysophosphatidylcholine (LPC) and lysophosphatidylethanolamine (LPE), but not on lysophosphatidylserine (LPS), and lysophosphatidylglycerol (LPG). It may act by transphosphatidylation, releasing exclusively cyclic phosphate products as second products. This Loxosceles boneti (North American fiddleback spider) protein is Dermonecrotic toxin LbSicTox-betaIA1a.